Consider the following 273-residue polypeptide: Undecaprenyl-diphosphatase (273 aa).

Transmembrane regions (helical) follow at residues F4–I24, K43–Y63, F83–K103, L109–A129, A184–L204, V218–L238, and V248–M268.

Belongs to the UppP family.

The protein localises to the cell inner membrane. It catalyses the reaction di-trans,octa-cis-undecaprenyl diphosphate + H2O = di-trans,octa-cis-undecaprenyl phosphate + phosphate + H(+). Catalyzes the dephosphorylation of undecaprenyl diphosphate (UPP). Confers resistance to bacitracin. The protein is Undecaprenyl-diphosphatase of Nitrosospira multiformis (strain ATCC 25196 / NCIMB 11849 / C 71).